Reading from the N-terminus, the 411-residue chain is Probable tRNA pseudouridine synthase D (411 aa).

D79 functions as the Nucleophile in the catalytic mechanism. A TRUD domain is found at G150–A369.

This sequence belongs to the pseudouridine synthase TruD family.

The catalysed reaction is uridine(13) in tRNA = pseudouridine(13) in tRNA. In terms of biological role, could be responsible for synthesis of pseudouridine from uracil-13 in transfer RNAs. This chain is Probable tRNA pseudouridine synthase D, found in Thermoplasma acidophilum (strain ATCC 25905 / DSM 1728 / JCM 9062 / NBRC 15155 / AMRC-C165).